The sequence spans 83 residues: Arminin 3a (83 aa).

The first 18 residues, 1–18, serve as a signal peptide directing secretion; the sequence is MKTVFAILFLTFIALTCA. Positions 19–57 are excised as a propeptide; sequence RNYEDLKEKIKNEVEREIFEDLEEESDELENNFKKFNDA. Position 80 is an alanine amide (A80).

It belongs to the arminin family. In terms of tissue distribution, expressed in entodermal epithelium along the body column.

The protein localises to the secreted. The protein resides in the target cell membrane. Functionally, antimicrobial peptide with a broad-spectrum antimicrobial activity. Keeps its antibacterial activity under a wide range of salt concentrations that mimic physiological conditions of human blood, which is surprising, since Hydra is an obligate freshwater animal with nearly no salt tolerance. Does not affect red blood cells. The polypeptide is Arminin 3a (Hydra vulgaris (Hydra)).